Reading from the N-terminus, the 168-residue chain is Photosystem I assembly protein Ycf3 (168 aa).

TPR repeat units follow at residues 35–68 (AFTY…EIDP), 72–105 (SYIL…NPFL), and 120–153 (GEQA…TPGN).

It belongs to the Ycf3 family.

Its subcellular location is the plastid. The protein resides in the chloroplast thylakoid membrane. Its function is as follows. Essential for the assembly of the photosystem I (PSI) complex. May act as a chaperone-like factor to guide the assembly of the PSI subunits. This Gossypium barbadense (Sea Island cotton) protein is Photosystem I assembly protein Ycf3.